A 507-amino-acid chain; its full sequence is UDP-N-acetylmuramoyl-L-alanyl-D-glutamate--2,6-diaminopimelate ligase (507 aa).

Residue serine 32 participates in UDP-N-acetyl-alpha-D-muramoyl-L-alanyl-D-glutamate binding. 117–123 (GTNGKTT) lines the ATP pocket. Residues 159–160 (TT), serine 186, glutamine 192, and arginine 194 each bind UDP-N-acetyl-alpha-D-muramoyl-L-alanyl-D-glutamate. The residue at position 226 (lysine 226) is an N6-carboxylysine. Meso-2,6-diaminopimelate contacts are provided by residues arginine 400, 424-427 (DNPR), glycine 475, and glutamate 479. The Meso-diaminopimelate recognition motif signature appears at 424-427 (DNPR).

It belongs to the MurCDEF family. MurE subfamily. Mg(2+) serves as cofactor. In terms of processing, carboxylation is probably crucial for Mg(2+) binding and, consequently, for the gamma-phosphate positioning of ATP.

The protein localises to the cytoplasm. The catalysed reaction is UDP-N-acetyl-alpha-D-muramoyl-L-alanyl-D-glutamate + meso-2,6-diaminopimelate + ATP = UDP-N-acetyl-alpha-D-muramoyl-L-alanyl-gamma-D-glutamyl-meso-2,6-diaminopimelate + ADP + phosphate + H(+). It participates in cell wall biogenesis; peptidoglycan biosynthesis. Its function is as follows. Catalyzes the addition of meso-diaminopimelic acid to the nucleotide precursor UDP-N-acetylmuramoyl-L-alanyl-D-glutamate (UMAG) in the biosynthesis of bacterial cell-wall peptidoglycan. The protein is UDP-N-acetylmuramoyl-L-alanyl-D-glutamate--2,6-diaminopimelate ligase of Prochlorococcus marinus (strain MIT 9313).